Consider the following 727-residue polypeptide: Procollagen-lysine,2-oxoglutarate 5-dioxygenase 1 (727 aa).

Residues 1-18 (MRPLLLLAPLGWLLLAEA) form the signal peptide. N-linked (GlcNAc...) asparagine glycans are attached at residues Asn163, Asn197, and Asn538. One can recognise a Fe2OG dioxygenase domain in the interval 636-727 (QFDLAFVVRY…RYIAVSFVDP (92 aa)). Fe cation contacts are provided by His656 and Asp658. A glycan (N-linked (GlcNAc...) asparagine) is linked at Asn686. His708 is a binding site for Fe cation. Arg718 is an active-site residue.

As to quaternary structure, homodimer. Identified in a complex with P3H3 and P3H4. The cofactor is Fe(2+). L-ascorbate is required as a cofactor.

It localises to the rough endoplasmic reticulum membrane. The catalysed reaction is L-lysyl-[collagen] + 2-oxoglutarate + O2 = (5R)-5-hydroxy-L-lysyl-[collagen] + succinate + CO2. Its function is as follows. Part of a complex composed of PLOD1, P3H3 and P3H4 that catalyzes hydroxylation of lysine residues in collagen alpha chains and is required for normal assembly and cross-linkling of collagen fibrils. Forms hydroxylysine residues in -Xaa-Lys-Gly- sequences in collagens. These hydroxylysines serve as sites of attachment for carbohydrate units and are essential for the stability of the intermolecular collagen cross-links. This is Procollagen-lysine,2-oxoglutarate 5-dioxygenase 1 (PLOD1) from Pongo abelii (Sumatran orangutan).